A 365-amino-acid chain; its full sequence is Histidinol-phosphate aminotransferase (365 aa).

K220 bears the N6-(pyridoxal phosphate)lysine mark.

Belongs to the class-II pyridoxal-phosphate-dependent aminotransferase family. Histidinol-phosphate aminotransferase subfamily. As to quaternary structure, homodimer. The cofactor is pyridoxal 5'-phosphate.

It catalyses the reaction L-histidinol phosphate + 2-oxoglutarate = 3-(imidazol-4-yl)-2-oxopropyl phosphate + L-glutamate. The protein operates within amino-acid biosynthesis; L-histidine biosynthesis; L-histidine from 5-phospho-alpha-D-ribose 1-diphosphate: step 7/9. The chain is Histidinol-phosphate aminotransferase (hisC) from Xylella fastidiosa (strain Temecula1 / ATCC 700964).